We begin with the raw amino-acid sequence, 740 residues long: Phosphoribosylformylglycinamidine synthase subunit PurL (740 aa).

The active site involves His53. ATP contacts are provided by Tyr56 and Lys95. Glu97 contributes to the Mg(2+) binding site. Residues 98 to 101 (SHNH) and Arg120 each bind substrate. The Proton acceptor role is filled by His99. Asp121 contacts Mg(2+). A substrate-binding site is contributed by Gln244. Residue Asp272 participates in Mg(2+) binding. Residue 316 to 318 (ESQ) participates in substrate binding. Residues Asp497 and Gly534 each coordinate ATP. Residue Asn535 coordinates Mg(2+). A substrate-binding site is contributed by Ser537.

It belongs to the FGAMS family. As to quaternary structure, monomer. Part of the FGAM synthase complex composed of 1 PurL, 1 PurQ and 2 PurS subunits.

It localises to the cytoplasm. It carries out the reaction N(2)-formyl-N(1)-(5-phospho-beta-D-ribosyl)glycinamide + L-glutamine + ATP + H2O = 2-formamido-N(1)-(5-O-phospho-beta-D-ribosyl)acetamidine + L-glutamate + ADP + phosphate + H(+). It functions in the pathway purine metabolism; IMP biosynthesis via de novo pathway; 5-amino-1-(5-phospho-D-ribosyl)imidazole from N(2)-formyl-N(1)-(5-phospho-D-ribosyl)glycinamide: step 1/2. Part of the phosphoribosylformylglycinamidine synthase complex involved in the purines biosynthetic pathway. Catalyzes the ATP-dependent conversion of formylglycinamide ribonucleotide (FGAR) and glutamine to yield formylglycinamidine ribonucleotide (FGAM) and glutamate. The FGAM synthase complex is composed of three subunits. PurQ produces an ammonia molecule by converting glutamine to glutamate. PurL transfers the ammonia molecule to FGAR to form FGAM in an ATP-dependent manner. PurS interacts with PurQ and PurL and is thought to assist in the transfer of the ammonia molecule from PurQ to PurL. The polypeptide is Phosphoribosylformylglycinamidine synthase subunit PurL (Rhodospirillum rubrum (strain ATCC 11170 / ATH 1.1.1 / DSM 467 / LMG 4362 / NCIMB 8255 / S1)).